We begin with the raw amino-acid sequence, 322 residues long: Large ribosomal subunit protein uL29m (322 aa).

Residues 1–44 (MLNVQRGLHTTVRLSARTKYTKPKPKPQARVIKSEPSQVTHHDN) form a disordered region.

Belongs to the universal ribosomal protein uL29 family. In terms of assembly, component of the mitochondrial large ribosomal subunit. Mature mitochondrial ribosomes consist of a small (37S) and a large (54S) subunit. The 37S subunit contains at least 33 different proteins and 1 molecule of RNA (15S). The 54S subunit contains at least 45 different proteins and 1 molecule of RNA (21S).

Its subcellular location is the mitochondrion. The sequence is that of Large ribosomal subunit protein uL29m (MRPL4) from Vanderwaltozyma polyspora (strain ATCC 22028 / DSM 70294 / BCRC 21397 / CBS 2163 / NBRC 10782 / NRRL Y-8283 / UCD 57-17) (Kluyveromyces polysporus).